We begin with the raw amino-acid sequence, 463 residues long: Glutamate--tRNA ligase (463 aa).

The 'HIGH' region signature appears at 10–20 (PSPTGHLHIGG). The short motif at 236–240 (KLSKR) is the 'KMSKS' region element. Position 239 (lysine 239) interacts with ATP.

It belongs to the class-I aminoacyl-tRNA synthetase family. Glutamate--tRNA ligase type 1 subfamily. In terms of assembly, monomer.

The protein localises to the cytoplasm. It catalyses the reaction tRNA(Glu) + L-glutamate + ATP = L-glutamyl-tRNA(Glu) + AMP + diphosphate. Catalyzes the attachment of glutamate to tRNA(Glu) in a two-step reaction: glutamate is first activated by ATP to form Glu-AMP and then transferred to the acceptor end of tRNA(Glu). The sequence is that of Glutamate--tRNA ligase from Nitratidesulfovibrio vulgaris (strain DP4) (Desulfovibrio vulgaris).